The primary structure comprises 198 residues: Elongation factor Ts (198 aa).

Positions threonine 81–valine 84 are involved in Mg(2+) ion dislocation from EF-Tu.

Belongs to the EF-Ts family.

Its subcellular location is the cytoplasm. In terms of biological role, associates with the EF-Tu.GDP complex and induces the exchange of GDP to GTP. It remains bound to the aminoacyl-tRNA.EF-Tu.GTP complex up to the GTP hydrolysis stage on the ribosome. This Dictyoglomus thermophilum (strain ATCC 35947 / DSM 3960 / H-6-12) protein is Elongation factor Ts.